The primary structure comprises 112 residues: FK506-binding protein 1A (112 aa).

Positions 20-108 constitute a PPIase FKBP-type domain; sequence GDFVTIHYTG…IFEVELLGIN (89 aa).

The protein belongs to the FKBP-type PPIase family. FKBP1 subfamily.

It localises to the cytoplasm. The catalysed reaction is [protein]-peptidylproline (omega=180) = [protein]-peptidylproline (omega=0). Its activity is regulated as follows. Inhibited by both FK506 and rapamycin. Functionally, PPIases accelerate the folding of proteins. It catalyzes the cis-trans isomerization of proline imidic peptide bonds in oligopeptides. The polypeptide is FK506-binding protein 1A (fpr1A) (Aspergillus fumigatus (strain ATCC MYA-4609 / CBS 101355 / FGSC A1100 / Af293) (Neosartorya fumigata)).